The following is a 116-amino-acid chain: MARSMKLACVVLVMCMIVAPMAEGAISCGAVTGDLSPCLTYLTGGPGPSPQCCGGVKKLLAAANTTPDRQAACNCMKSAASSITKLNTNNAAALPGKCGVNIPYKISTSTNCNTVK.

A signal peptide spans 1 to 24 (MARSMKLACVVLVMCMIVAPMAEG). 4 disulfides stabilise this stretch: C28–C75, C38–C52, C53–C98, and C73–C112.

It belongs to the plant LTP family.

Plant non-specific lipid-transfer proteins transfer phospholipids as well as galactolipids across membranes. May play a role in wax or cutin deposition in the cell walls of expanding epidermal cells and certain secretory tissues. This Lens culinaris (Lentil) protein is Non-specific lipid-transfer protein 5.